A 481-amino-acid polypeptide reads, in one-letter code: 3-isopropylmalate dehydratase large subunit (481 aa).

[4Fe-4S] cluster-binding residues include Cys355, Cys415, and Cys418.

The protein belongs to the aconitase/IPM isomerase family. LeuC type 1 subfamily. In terms of assembly, heterodimer of LeuC and LeuD. The cofactor is [4Fe-4S] cluster.

The enzyme catalyses (2R,3S)-3-isopropylmalate = (2S)-2-isopropylmalate. Its pathway is amino-acid biosynthesis; L-leucine biosynthesis; L-leucine from 3-methyl-2-oxobutanoate: step 2/4. Catalyzes the isomerization between 2-isopropylmalate and 3-isopropylmalate, via the formation of 2-isopropylmaleate. This chain is 3-isopropylmalate dehydratase large subunit, found in Symbiobacterium thermophilum (strain DSM 24528 / JCM 14929 / IAM 14863 / T).